Reading from the N-terminus, the 379-residue chain is Carbamoyl phosphate synthase small chain (379 aa).

Residues 1–189 are CPSase; sequence MSKSALLVLE…GLPEAKDDSE (189 aa). The L-glutamine site is built by serine 47, glycine 241, and glycine 243. The 187-residue stretch at 193-379 folds into the Glutamine amidotransferase type-1 domain; sequence HVVAYDFGAK…FIELIKQHSA (187 aa). Cysteine 269 serves as the catalytic Nucleophile. Residues leucine 270, glutamine 273, asparagine 311, glycine 313, and phenylalanine 314 each contribute to the L-glutamine site. Residues histidine 353 and glutamate 355 contribute to the active site.

It belongs to the CarA family. As to quaternary structure, composed of two chains; the small (or glutamine) chain promotes the hydrolysis of glutamine to ammonia, which is used by the large (or ammonia) chain to synthesize carbamoyl phosphate. Tetramer of heterodimers (alpha,beta)4.

The catalysed reaction is hydrogencarbonate + L-glutamine + 2 ATP + H2O = carbamoyl phosphate + L-glutamate + 2 ADP + phosphate + 2 H(+). The enzyme catalyses L-glutamine + H2O = L-glutamate + NH4(+). Its pathway is amino-acid biosynthesis; L-arginine biosynthesis; carbamoyl phosphate from bicarbonate: step 1/1. The protein operates within pyrimidine metabolism; UMP biosynthesis via de novo pathway; (S)-dihydroorotate from bicarbonate: step 1/3. Small subunit of the glutamine-dependent carbamoyl phosphate synthetase (CPSase). CPSase catalyzes the formation of carbamoyl phosphate from the ammonia moiety of glutamine, carbonate, and phosphate donated by ATP, constituting the first step of 2 biosynthetic pathways, one leading to arginine and/or urea and the other to pyrimidine nucleotides. The small subunit (glutamine amidotransferase) binds and cleaves glutamine to supply the large subunit with the substrate ammonia. The sequence is that of Carbamoyl phosphate synthase small chain from Vibrio vulnificus (strain YJ016).